Reading from the N-terminus, the 244-residue chain is Probable 2-phosphosulfolactate phosphatase (244 aa).

The protein belongs to the ComB family. Mg(2+) is required as a cofactor.

It catalyses the reaction (2R)-O-phospho-3-sulfolactate + H2O = (2R)-3-sulfolactate + phosphate. The protein is Probable 2-phosphosulfolactate phosphatase of Cyanothece sp. (strain PCC 7425 / ATCC 29141).